Reading from the N-terminus, the 459-residue chain is SLIT-ROBO Rho GTPase-activating protein 2C (459 aa).

Residues 22–325 enclose the F-BAR domain; sequence KEIRAQLTEQ…AVENLDATSD (304 aa). A compositionally biased stretch (basic and acidic residues) spans 181–202; the sequence is LKEAEKQEEKQIGKSVKQEDRQ. The tract at residues 181-211 is disordered; sequence LKEAEKQEEKQIGKSVKQEDRQTPCSPDSTA. Residues 363-401 are a coiled coil; that stretch reads QSELVQRCQQLQSRLSTLKIENEEVKKTMEATLQTIQDI.

In terms of assembly, homodimer. Interacts (via F-BAR domain) with SRGAP2/SRGAP2A (via F-BAR domain); formation of the heterodimer inhibits SRGAP2/SRGAP2A function. In terms of tissue distribution, ubiquitously expressed with higher expression in cerebellum. Probably expressed in fetal and adult neurons (at protein level).

Functionally, human-specific protein that acts as a key modifier of cortical connectivity in the human brain. Acts by inhibiting the functions of ancestral paralog SRGAP2/SRGAP2A, a postsynaptic protein that regulates excitatory and inhibitory synapse maturation and density in cortical pyramidal neurons. SRGAP2C is unstable but is able to heterodimerize with SRGAP2/SRGAP2A, thereby reducing SRGAP2/SRGAP2A levels through proteasome-dependent degradation. Inhibition of SRGAP2/SRGAP2A by SRGAP2C leads to an increase in synaptic density and protracted synaptic maturation of both excitatory and inhibitory synapses. Modifies cortical circuit connectivity by increasing the number of local and long-range cortical inputs received by layer 2/3 pyramidal neurons. Also able to increase the probability of sensory-evoked responses by layer 2/3 pyramidal neurons. The polypeptide is SLIT-ROBO Rho GTPase-activating protein 2C (Homo sapiens (Human)).